A 175-amino-acid chain; its full sequence is T-cell surface glycoprotein CD3 epsilon chain (175 aa).

The first 21 residues, 1–21 (MRCEVPLPLLGLLLCVVGAAA), serve as a signal peptide directing secretion. At 22-100 (QGGQEEFAVE…VCANCEELDT (79 aa)) the chain is on the extracellular side. The helical transmembrane segment at 101 to 121 (FTVVGIIAADLLITLGVLILV) threads the bilayer. The Cytoplasmic segment spans residues 122-175 (YYFSKNKKGQSRAAAGSRPRAQKMRRPPPVPNPDYEPIRKGQRDVYAGLEHRGF). The tract at residues 133-163 (RAAAGSRPRAQKMRRPPPVPNPDYEPIRKGQ) is disordered. The ITAM domain occupies 146 to 173 (RRPPPVPNPDYEPIRKGQRDVYAGLEHR).

As to quaternary structure, the TCR/CD3 complex of T-lymphocytes consists of either a TCR alpha/beta or TCR gamma/delta heterodimer coexpressed at the cell surface with the invariant subunits of CD3 labeled gamma, delta, epsilon, zeta, and eta.

The protein resides in the cell membrane. In terms of biological role, the CD3 complex mediates signal transduction, resulting in T-cell activation and proliferation. Required for normal immune responses. The chain is T-cell surface glycoprotein CD3 epsilon chain (CD3E) from Gallus gallus (Chicken).